A 445-amino-acid polypeptide reads, in one-letter code: Tubulin beta-2 chain (445 aa).

GTP contacts are provided by Gln11, Glu69, Ser138, Gly142, Thr143, Gly144, Asn204, and Asn226. Glu69 is a binding site for Mg(2+). The segment at 424–445 is disordered; it reads QYQDATAEDEGEFDEDEEVEEA. Positions 429-445 are enriched in acidic residues; that stretch reads TAEDEGEFDEDEEVEEA.

The protein belongs to the tubulin family. In terms of assembly, dimer of alpha and beta chains. A typical microtubule is a hollow water-filled tube with an outer diameter of 25 nm and an inner diameter of 15 nM. Alpha-beta heterodimers associate head-to-tail to form protofilaments running lengthwise along the microtubule wall with the beta-tubulin subunit facing the microtubule plus end conferring a structural polarity. Microtubules usually have 13 protofilaments but different protofilament numbers can be found in some organisms and specialized cells. Mg(2+) is required as a cofactor.

The protein localises to the cytoplasm. Its subcellular location is the cytoskeleton. Tubulin is the major constituent of microtubules, a cylinder consisting of laterally associated linear protofilaments composed of alpha- and beta-tubulin heterodimers. Microtubules grow by the addition of GTP-tubulin dimers to the microtubule end, where a stabilizing cap forms. Below the cap, tubulin dimers are in GDP-bound state, owing to GTPase activity of alpha-tubulin. The chain is Tubulin beta-2 chain (TUB-2) from Echinococcus multilocularis (Fox tapeworm).